A 1032-amino-acid polypeptide reads, in one-letter code: Y' element ATP-dependent helicase YPR204W (1032 aa).

Positions 1-175 (MADTPSVAVQ…LQRIGLTGLA (175 aa)) constitute a Helicase ATP-binding domain. 11–18 (APPGYGKT) lines the ATP pocket. The short motif at 121–124 (DEFH) is the DEAH box element. The Helicase C-terminal domain maps to 232–381 (KLLLALFEIE…EFYGLESKKG (150 aa)). Low complexity predominate over residues 455–634 (ANASTNATTN…ATTTESTNAS (180 aa)). A disordered region spans residues 455–658 (ANASTNATTN…RFHPVTDINK (204 aa)). The segment covering 635–658 (AKEDANKDGNAEDNRFHPVTDINK) has biased composition (basic and acidic residues).

This sequence belongs to the helicase family. Yeast subtelomeric Y' repeat subfamily.

Catalyzes DNA unwinding and is involved in telomerase-independent telomere maintenance. The polypeptide is Y' element ATP-dependent helicase YPR204W (Saccharomyces cerevisiae (strain ATCC 204508 / S288c) (Baker's yeast)).